The sequence spans 333 residues: Holliday junction branch migration complex subunit RuvB (333 aa).

A large ATPase domain (RuvB-L) region spans residues 1 to 182; that stretch reads MDERLLSGES…FGVLSRLEYY (182 aa). ATP is bound by residues Leu-21, Arg-22, Gly-63, Lys-66, Thr-67, Thr-68, 129-131, Arg-172, Tyr-182, and Arg-219; that span reads EDF. Thr-67 contributes to the Mg(2+) binding site. The small ATPAse domain (RuvB-S) stretch occupies residues 183 to 253; sequence TVDQLSAIVE…ITQMALELLQ (71 aa). Residues 256 to 333 form a head domain (RuvB-H) region; sequence KLGLDHIDHK…EHFGMEMPKV (78 aa). Residues Arg-311 and Arg-316 each coordinate DNA.

This sequence belongs to the RuvB family. As to quaternary structure, homohexamer. Forms an RuvA(8)-RuvB(12)-Holliday junction (HJ) complex. HJ DNA is sandwiched between 2 RuvA tetramers; dsDNA enters through RuvA and exits via RuvB. An RuvB hexamer assembles on each DNA strand where it exits the tetramer. Each RuvB hexamer is contacted by two RuvA subunits (via domain III) on 2 adjacent RuvB subunits; this complex drives branch migration. In the full resolvosome a probable DNA-RuvA(4)-RuvB(12)-RuvC(2) complex forms which resolves the HJ.

Its subcellular location is the cytoplasm. The catalysed reaction is ATP + H2O = ADP + phosphate + H(+). Its function is as follows. The RuvA-RuvB-RuvC complex processes Holliday junction (HJ) DNA during genetic recombination and DNA repair, while the RuvA-RuvB complex plays an important role in the rescue of blocked DNA replication forks via replication fork reversal (RFR). RuvA specifically binds to HJ cruciform DNA, conferring on it an open structure. The RuvB hexamer acts as an ATP-dependent pump, pulling dsDNA into and through the RuvAB complex. RuvB forms 2 homohexamers on either side of HJ DNA bound by 1 or 2 RuvA tetramers; 4 subunits per hexamer contact DNA at a time. Coordinated motions by a converter formed by DNA-disengaged RuvB subunits stimulates ATP hydrolysis and nucleotide exchange. Immobilization of the converter enables RuvB to convert the ATP-contained energy into a lever motion, pulling 2 nucleotides of DNA out of the RuvA tetramer per ATP hydrolyzed, thus driving DNA branch migration. The RuvB motors rotate together with the DNA substrate, which together with the progressing nucleotide cycle form the mechanistic basis for DNA recombination by continuous HJ branch migration. Branch migration allows RuvC to scan DNA until it finds its consensus sequence, where it cleaves and resolves cruciform DNA. The sequence is that of Holliday junction branch migration complex subunit RuvB from Bacillus cereus (strain Q1).